A 428-amino-acid chain; its full sequence is uncharacterized protein (428 aa).

12 helical membrane-spanning segments follow: residues 14-34 (LYDW…FPLF), 55-75 (YTIA…GTIA), 84-104 (FFGF…FIPS), 107-127 (WLLL…ANVF), 149-169 (FGLG…VILL), 182-202 (ASQL…IPMI), 238-258 (LFLF…IITM), 272-292 (SLLI…IIYG), 302-322 (TMLY…YFME), 324-344 (TLDF…IQAL), 361-381 (FFGF…LLIA), and 392-412 (TAVF…AFVP).

It belongs to the major facilitator superfamily.

It is found in the cell membrane. This is an uncharacterized protein from Bacillus subtilis (strain 168).